We begin with the raw amino-acid sequence, 527 residues long: MRRRRRRDGFYPAPDFRDREAEDMAGVFDIDLDQPEDAGSEDELEEGGQLNESMDHGGVGPYELGMEHCEKFEISETSVNRGPEKIRPECFELLRVLGKGGYGKVFQVRKVTGANTGKIFAMKVLKKAMIVRNAKDTAHTKAERNILEEVKHPFIVDLIYAFQTGGKLYLILEYLSGGELFMQLEREGIFMEDTACFYLAEISMALGHLHQKGIIYRDLKPENIMLNHQGHVKLTDFGLCKESIHDGTVTHTFCGTIEYMAPEILMRSGHNRAVDWWSLGALMYDMLTGAPPFTGENRKKTIDKILKCKLNLPPYLTQEARDLLKKLLKRNAASRLGAGPGDAGEVQAHPFFRHINWEELLARKVEPPFKPLLQSEEDVSQFDSKFTRQTPVDSPDDSALSESANQVFLGFTYVAPSVLESVKEKFSFEPKIRSPRRFIGSPRTPVSPVKFSPGDFWGRGASASTANPQTPVEYPMETSGIEQMDVTMSGEASAPLPIRQPNSGPYKKQAFPMISKRPEHLRMNLEL.

The segment at 1–54 (MRRRRRRDGFYPAPDFRDREAEDMAGVFDIDLDQPEDAGSEDELEEGGQLNESM) is disordered. A TOS motif motif is present at residues 28–32 (FDIDL). Acidic residues predominate over residues 30-46 (IDLDQPEDAGSEDELEE). A Protein kinase domain is found at 91–352 (FELLRVLGKG…AGEVQAHPFF (262 aa)). ATP-binding positions include 97–105 (LGKGGYGKV) and K123. The Proton acceptor role is filled by D218. Residue T252 is modified to Phosphothreonine; by PDPK1. An AGC-kinase C-terminal domain is found at 353–423 (RHINWEELLA…VAPSVLESVK (71 aa)). Residue S394 is modified to Phosphoserine. T412 carries the phosphothreonine; by MTOR, NEK6 and NEK7 modification. The interval 424-527 (EKFSFEPKIR…PEHLRMNLEL (104 aa)) is autoinhibitory domain. S434 and S441 each carry phosphoserine. T444 carries the phosphothreonine modification. Residues S447 and S452 each carry the phosphoserine modification. Residue K516 is modified to N6-acetyllysine.

It belongs to the protein kinase superfamily. AGC Ser/Thr protein kinase family. S6 kinase subfamily. As to quaternary structure, interacts with PPP1R9A/neurabin-1. Interacts with RPTOR. Interacts with IRS1. Interacts with EIF3B and EIF3C. Interacts with TRAF4. Interacts with POLDIP3. Interacts (via N-terminus) with IER5. Phosphorylation at Thr-412 is regulated by mTORC1. The phosphorylation at this site is maintained by an agonist-dependent autophosphorylation mechanism. Activated by phosphorylation at Thr-252 by PDPK1. Dephosphorylation by PPP1CC at Thr-412 in mitochondrion.

The protein resides in the cytoplasm. The protein localises to the synapse. It is found in the synaptosome. Its subcellular location is the mitochondrion outer membrane. It localises to the mitochondrion. The catalysed reaction is L-seryl-[protein] + ATP = O-phospho-L-seryl-[protein] + ADP + H(+). It carries out the reaction L-threonyl-[protein] + ATP = O-phospho-L-threonyl-[protein] + ADP + H(+). Its activity is regulated as follows. Inactivated by binding to URI1. Activation requires multiple phosphorylation events on serine/threonine residues. Activation appears to be first mediated by phosphorylation of multiple sites in the autoinhibitory domain, which facilitates phosphorylation at Thr-412, disrupting the autoinhibitory mechanism and allowing phosphorylation of Thr-252 by PDPK1. The active conformation of the kinase is believed to be stabilized by a mechanism involving three conserved phosphorylation sites located in the kinase domain activation loop (Thr-252) and in the AGC-kinase C-terminal domain (Ser-394 in the middle of the tail/linker region and Thr-412 within a hydrophobic motif at its end). Activated by mTORC1; isoform Alpha I and isoform Alpha II are sensitive to rapamycin, which inhibits activating phosphorylation at Thr-412. Activated by PDPK1. In terms of biological role, serine/threonine-protein kinase that acts downstream of mTOR signaling in response to growth factors and nutrients to promote cell proliferation, cell growth and cell cycle progression. Regulates protein synthesis through phosphorylation of EIF4B, RPS6 and EEF2K, and contributes to cell survival by repressing the pro-apoptotic function of BAD. Under conditions of nutrient depletion, the inactive form associates with the EIF3 translation initiation complex. Upon mitogenic stimulation, phosphorylation by the mechanistic target of rapamycin complex 1 (mTORC1) leads to dissociation from the EIF3 complex and activation. The active form then phosphorylates and activates several substrates in the pre-initiation complex, including the EIF2B complex and the cap-binding complex component EIF4B. Also controls translation initiation by phosphorylating a negative regulator of EIF4A, PDCD4, targeting it for ubiquitination and subsequent proteolysis. Promotes initiation of the pioneer round of protein synthesis by phosphorylating POLDIP3/SKAR. In response to IGF1, activates translation elongation by phosphorylating EEF2 kinase (EEF2K), which leads to its inhibition and thus activation of EEF2. Also plays a role in feedback regulation of mTORC2 by mTORC1 by phosphorylating MAPKAP1/SIN1, MTOR and RICTOR, resulting in the inhibition of mTORC2 and AKT1 signaling. Also involved in feedback regulation of mTORC1 and mTORC2 by phosphorylating DEPTOR. Mediates cell survival by phosphorylating the pro-apoptotic protein BAD and suppressing its pro-apoptotic function. Phosphorylates mitochondrial URI1 leading to dissociation of a URI1-PPP1CC complex. The free mitochondrial PPP1CC can then dephosphorylate RPS6KB1 at Thr-412, which is proposed to be a negative feedback mechanism for the RPS6KB1 anti-apoptotic function. Mediates TNF-alpha-induced insulin resistance by phosphorylating IRS1 at multiple serine residues, resulting in accelerated degradation of IRS1. In cells lacking functional TSC1-2 complex, constitutively phosphorylates and inhibits GSK3B. May be involved in cytoskeletal rearrangement through binding to neurabin. Phosphorylates and activates the pyrimidine biosynthesis enzyme CAD, downstream of MTOR. Following activation by mTORC1, phosphorylates EPRS and thereby plays a key role in fatty acid uptake by adipocytes and also most probably in interferon-gamma-induced translation inhibition. This chain is Ribosomal protein S6 kinase beta-1 (RPS6KB1), found in Bos taurus (Bovine).